A 212-amino-acid polypeptide reads, in one-letter code: MLDKQTMVTAHNALPGRTTAMSIDDTHFVNGSSLTAAPQSGQQQILIGMGCFWGAERLFWQLDGVISTSVGYSGGFTPNPTYEEVCSGKTGHTEVVRVIFDPERLPLTELLRAFWERHDPTQGMRQGNDRGTQYRSAIYTFSEDQREIAEASKAAYQALLTAQHRPSITTEILPAGAYYFAETYHQQYLAKNPNGYCGLGGTGVCFPPHSTL.

Cys51 is a catalytic residue.

Belongs to the MsrA Met sulfoxide reductase family.

It carries out the reaction L-methionyl-[protein] + [thioredoxin]-disulfide + H2O = L-methionyl-(S)-S-oxide-[protein] + [thioredoxin]-dithiol. The enzyme catalyses [thioredoxin]-disulfide + L-methionine + H2O = L-methionine (S)-S-oxide + [thioredoxin]-dithiol. Has an important function as a repair enzyme for proteins that have been inactivated by oxidation. Catalyzes the reversible oxidation-reduction of methionine sulfoxide in proteins to methionine. In Vibrio cholerae serotype O1 (strain ATCC 39541 / Classical Ogawa 395 / O395), this protein is Peptide methionine sulfoxide reductase MsrA.